The primary structure comprises 93 residues: Bombyxin-related peptide B (93 aa).

The signal sequence occupies residues 1-21; it reads MKFVLVLVSLALLVSLASVQG. Intrachain disulfides connect cysteine 25/cysteine 80, cysteine 37/cysteine 93, and cysteine 79/cysteine 84. Positions 47–71 are cleaved as a propeptide — c peptide like; the sequence is SGAMGAAAMYGTRGWRWAAMGGNRG.

Belongs to the insulin family. Heterodimer of a B chain and an A chain linked by two disulfide bonds. In terms of tissue distribution, located in 4 pairs of medial neurosecretory cells in the brain.

It is found in the secreted. In Agrius convolvuli (Convolvulus hawk-moth), this protein is Bombyxin-related peptide B.